A 155-amino-acid chain; its full sequence is Ribosomal RNA large subunit methyltransferase H (155 aa).

S-adenosyl-L-methionine is bound by residues L73, G104, and 123 to 128 (LSPLTL).

The protein belongs to the RNA methyltransferase RlmH family. In terms of assembly, homodimer.

The protein localises to the cytoplasm. The catalysed reaction is pseudouridine(1915) in 23S rRNA + S-adenosyl-L-methionine = N(3)-methylpseudouridine(1915) in 23S rRNA + S-adenosyl-L-homocysteine + H(+). In terms of biological role, specifically methylates the pseudouridine at position 1915 (m3Psi1915) in 23S rRNA. The protein is Ribosomal RNA large subunit methyltransferase H of Pseudomonas savastanoi pv. phaseolicola (strain 1448A / Race 6) (Pseudomonas syringae pv. phaseolicola (strain 1448A / Race 6)).